The primary structure comprises 394 residues: RNA demethylase ALKBH5 (394 aa).

Disordered stretches follow at residues 1 to 26 (MAAA…YKAG) and 48 to 83 (AEPY…EEAR). Alanine 2 bears the N-acetylalanine mark. A Glycyl lysine isopeptide (Lys-Gly) (interchain with G-Cter in ubiquitin) cross-link involves residue lysine 57. A compositionally biased stretch (basic and acidic residues) spans 59–83 (KYPEDSDPERSDFEEQQLQKEEEAR). Phosphoserine occurs at positions 64 and 69. A coiled-coil region spans residues 67-116 (ERSDFEEQQLQKEEEARKVKSGIRQMRLFSQDECAKIEARIDEVVSRAEK). Lysine 86 is covalently cross-linked (Glycyl lysine isopeptide (Lys-Gly) (interchain with G-Cter in SUMO1)). A Phosphoserine modification is found at serine 87. Lysine 132 carries the N6-acetyllysine modification. Tyrosine 139 is an active-site residue. 2-oxoglutarate-binding residues include asparagine 193, tyrosine 195, and histidine 204. A disulfide bridge connects residues cysteine 230 and cysteine 267. Lysine 235 is modified (N6-acetyllysine). 2-oxoglutarate contacts are provided by histidine 266 and arginine 277. Residues 298–394 (SSSVLPPSYA…PARKVKMRRH (97 aa)) are disordered. Lysine 321 is covalently cross-linked (Glycyl lysine isopeptide (Lys-Gly) (interchain with G-Cter in SUMO1)). Serine 325 is modified (phosphoserine). Lysine 328 is covalently cross-linked (Glycyl lysine isopeptide (Lys-Gly) (interchain with G-Cter in SUMO2)). The segment covering 328 to 349 (KADPDAAHRPRILEMDKEENRR) has biased composition (basic and acidic residues). 2 positions are modified to phosphoserine: serine 371 and serine 384.

The protein belongs to the alkB family. In terms of assembly, monomer. Interacts with RBM33; promoting desumoylation by SENP1 and recruitment to N(6)-methyladenosine-containing mRNAs. Interacts (when acetylated by KAT8) with PSPC1; interaction facilitates recognition of N(6)-methyladenosine (m6A) mRNA. The cofactor is Fe(2+). Post-translationally, phosphorylated at Ser-87 and Ser-325 in response to reactive oxygen species (ROS), promoting sumoylation and inactivation. Acetylated by KAT8 at Lys-235, promoting interaction with PSPC1, thereby facilitating recognition of N(6)-methyladenosine (m6A) mRNA by ALKBH5. Deacetylated at Lys-235 by HDAC7. In terms of processing, sumoylated at Lys-86 and Lys-321 by PIAS4 following phosphorylation at Ser-87 and Ser-325 in response to reactive oxygen species (ROS), inhibiting the RNA demethylase activity. Desumoylated by SENP1; relieving RNA demethylase inhibition, leading to N(6)-methyladenosine-containing mRNAs demethylation. Post-translationally, ubiquitinated at Lys-57 via 'Lys-48'-linked polyubiquitin chain, leading to its degradation by the proteasome. Deubiquitinated at Lys-57 by USP9X, promoting its stabilizazion.

The protein localises to the nucleus speckle. It carries out the reaction an N(6)-methyladenosine in mRNA + 2-oxoglutarate + O2 = an adenosine in mRNA + formaldehyde + succinate + CO2. RNA demethylase activity is inhibited following sumoylation. Inhibition is relieved following desumoylation. Functionally, dioxygenase that specifically demethylates N(6)-methyladenosine (m6A) RNA, the most prevalent internal modification of messenger RNA (mRNA) in higher eukaryotes. Demethylates RNA by oxidative demethylation, which requires molecular oxygen, alpha-ketoglutarate and iron. Demethylation of m6A mRNA affects mRNA processing, translation and export. Can also demethylate N(6)-methyladenosine in single-stranded DNA (in vitro). Required for the late meiotic and haploid phases of spermatogenesis by mediating m6A demethylation in spermatocytes and round spermatids: m6A demethylation of target transcripts is required for correct splicing and the production of longer 3'-UTR mRNAs in male germ cells. Involved in paraspeckle assembly, a nuclear membraneless organelle, by undergoing liquid-liquid phase separation. Paraspeckle assembly is coupled with m6A demethylation of RNAs, such as NEAT1 non-coding RNA. Also acts as a negative regulator of T-cell development: inhibits gamma-delta T-cell proliferation via demethylation of JAG1 and NOTCH2 transcripts. Inhibits regulatory T-cell (Treg) recruitment by mediating demethylation and destabilization of CCL28 mRNAs. This is RNA demethylase ALKBH5 (ALKBH5) from Bos taurus (Bovine).